A 263-amino-acid polypeptide reads, in one-letter code: uncharacterized protein (263 aa).

Residues Leu72–Lys168 adopt a coiled-coil conformation. Positions Glu76 to Asp158 are disordered. Positions Lys83–Leu95 are enriched in basic residues. The segment covering Lys96–Asp107 has biased composition (basic and acidic residues). Residues Lys108–Lys121 are compositionally biased toward basic residues. Composition is skewed to basic and acidic residues over residues Asp122–Asp131 and Lys139–Asp158.

This is an uncharacterized protein from Dictyostelium discoideum (Social amoeba).